A 452-amino-acid chain; its full sequence is NADH-cytochrome b5 reductase-like protein alnC (452 aa).

In terms of domain architecture, Cytochrome b5 heme-binding spans 4-80 (PASITLAEVA…LKTLLVGSLQ (77 aa)). An FMN-binding site is contributed by 33-38 (AEYRED). Heme contacts are provided by His39 and His63. FMN contacts are provided by residues 80-83 (QSKT) and 116-125 (NDTSKYGQLP). A run of 2 helical transmembrane segments spans residues 120–140 (KYGQ…FFTL) and 166–186 (VGFL…ATFV). The FAD-binding FR-type domain maps to 225-324 (NTQQFLTLVD…RGPFGRYSPS (100 aa)). 302-305 (YLLN) serves as a coordination point for FAD. NADP(+) is bound by residues 389–390 (GQ) and 395–399 (WKGLR).

Belongs to the flavoprotein pyridine nucleotide cytochrome reductase family. The cofactor is FAD. FMN serves as cofactor.

The protein resides in the membrane. Its pathway is polyketide biosynthesis. Functionally, NADH-cytochrome b5 reductase-like protein; part of the gene cluster that mediates the biosynthesis of asperlin, a polyketide showing anti-inflammatory, antitumor and antibiotic activities. The first step of the asperlin biosynthesis is the production of the intermediate 2,4,6-octatrienoic acid by the highly redusing polyketide synthase alnA with cleavage of the PKS product by the esterase alnB. 2,4,6-octatrienoic acid is further converted to asperlin via several steps involving the remaining enzymes from the cluster. The chain is NADH-cytochrome b5 reductase-like protein alnC from Emericella nidulans (strain FGSC A4 / ATCC 38163 / CBS 112.46 / NRRL 194 / M139) (Aspergillus nidulans).